Consider the following 97-residue polypeptide: MLIKQFSRRSKNMKVQILLAFAALFVLAVGSYASESKKLDLRDALFSAMFSADYQLNPQERGCRYFLGECKKTSECCEHLACHDKHKWCAWDWTIGK.

The N-terminal stretch at 1–33 (MLIKQFSRRSKNMKVQILLAFAALFVLAVGSYA) is a signal peptide. Residues 34–61 (SESKKLDLRDALFSAMFSADYQLNPQER) constitute a propeptide that is removed on maturation. 3 cysteine pairs are disulfide-bonded: Cys-63–Cys-77, Cys-70–Cys-82, and Cys-76–Cys-89.

The protein belongs to the neurotoxin 10 (Hwtx-1) family. 12 (Hntx-12) subfamily. Expressed by the venom gland.

It is found in the secreted. Functionally, ion channel inhibitor. The polypeptide is U6-theraphotoxin-Hhn1a 1 (Cyriopagopus hainanus (Chinese bird spider)).